Consider the following 154-residue polypeptide: Transcriptional repressor NrdR (154 aa).

A zinc finger lies at 3–34 (CPFCRHPDSRVVDSREADEGQAIRRRRSCPEC). Positions 46–136 (LSVVKRSGVT…VYRSFSSAED (91 aa)) constitute an ATP-cone domain.

The protein belongs to the NrdR family. Zn(2+) is required as a cofactor.

Its function is as follows. Negatively regulates transcription of bacterial ribonucleotide reductase nrd genes and operons by binding to NrdR-boxes. This is Transcriptional repressor NrdR from Rhodococcus jostii (strain RHA1).